The primary structure comprises 259 residues: Imidazole glycerol phosphate synthase subunit HisF (259 aa).

Active-site residues include D11 and D130.

It belongs to the HisA/HisF family. In terms of assembly, heterodimer of HisH and HisF.

It is found in the cytoplasm. It carries out the reaction 5-[(5-phospho-1-deoxy-D-ribulos-1-ylimino)methylamino]-1-(5-phospho-beta-D-ribosyl)imidazole-4-carboxamide + L-glutamine = D-erythro-1-(imidazol-4-yl)glycerol 3-phosphate + 5-amino-1-(5-phospho-beta-D-ribosyl)imidazole-4-carboxamide + L-glutamate + H(+). Its pathway is amino-acid biosynthesis; L-histidine biosynthesis; L-histidine from 5-phospho-alpha-D-ribose 1-diphosphate: step 5/9. Its function is as follows. IGPS catalyzes the conversion of PRFAR and glutamine to IGP, AICAR and glutamate. The HisF subunit catalyzes the cyclization activity that produces IGP and AICAR from PRFAR using the ammonia provided by the HisH subunit. The sequence is that of Imidazole glycerol phosphate synthase subunit HisF from Syntrophobacter fumaroxidans (strain DSM 10017 / MPOB).